Reading from the N-terminus, the 265-residue chain is Indole-3-glycerol phosphate synthase (265 aa).

It belongs to the TrpC family.

It catalyses the reaction 1-(2-carboxyphenylamino)-1-deoxy-D-ribulose 5-phosphate + H(+) = (1S,2R)-1-C-(indol-3-yl)glycerol 3-phosphate + CO2 + H2O. Its pathway is amino-acid biosynthesis; L-tryptophan biosynthesis; L-tryptophan from chorismate: step 4/5. In Xanthomonas oryzae pv. oryzae (strain PXO99A), this protein is Indole-3-glycerol phosphate synthase.